An 831-amino-acid polypeptide reads, in one-letter code: Translation initiation factor IF-2 (831 aa).

In terms of domain architecture, tr-type G spans threonine 329–lysine 499. The segment at glycine 338–threonine 345 is G1. Residue glycine 338–threonine 345 participates in GTP binding. A G2 region spans residues glycine 363 to histidine 367. Positions aspartate 385–glycine 388 are G3. GTP is bound by residues aspartate 385–histidine 389 and asparagine 439–aspartate 442. The segment at asparagine 439–aspartate 442 is G4. A G5 region spans residues serine 475 to leucine 477.

This sequence belongs to the TRAFAC class translation factor GTPase superfamily. Classic translation factor GTPase family. IF-2 subfamily.

It localises to the cytoplasm. In terms of biological role, one of the essential components for the initiation of protein synthesis. Protects formylmethionyl-tRNA from spontaneous hydrolysis and promotes its binding to the 30S ribosomal subunits. Also involved in the hydrolysis of GTP during the formation of the 70S ribosomal complex. The polypeptide is Translation initiation factor IF-2 (Rickettsia massiliae (strain Mtu5)).